Here is a 231-residue protein sequence, read N- to C-terminus: Non-fluorescent flavoprotein (231 aa).

The protein belongs to the bacterial luciferase oxidoreductase family. In terms of assembly, homodimer. The cofactor is FMN.

The polypeptide is Non-fluorescent flavoprotein (luxF) (Photobacterium phosphoreum).